A 264-amino-acid chain; its full sequence is MHKLKLHGFNNLTKSLSFCIYDICYTKTADDRDGYIAYIDEQYNANRLTEILTETCSIIGANVLNIARQDYDPQGASVTILVSEEPIDPRDVDTSEHPGPLPNSVVAHLDKSHICVHTYPESHPEGGLCTFRADIEVSTCGVISPLKALNYLIHQLESDIVTIDYRVRGFTRDINGVKHFIDHQINSVQNFMSEDMKSLYHMMDVNVYQENIFHTKMLLKDFDLKHYLFNVNPEELSAAERKRITDLLYHEMQEIYYGRNLPVL.

Ser-112 (schiff-base intermediate with substrate; via pyruvic acid) is an active-site residue. At Ser-112 the chain carries Pyruvic acid (Ser); by autocatalysis. His-117 functions as the Proton acceptor; for processing activity in the catalytic mechanism. Cys-140 functions as the Proton donor; for catalytic activity in the catalytic mechanism.

The protein belongs to the prokaryotic AdoMetDC family. Type 2 subfamily. As to quaternary structure, heterooctamer of four alpha and four beta chains arranged as a tetramer of alpha/beta heterodimers. Pyruvate is required as a cofactor. Post-translationally, is synthesized initially as an inactive proenzyme. Formation of the active enzyme involves a self-maturation process in which the active site pyruvoyl group is generated from an internal serine residue via an autocatalytic post-translational modification. Two non-identical subunits are generated from the proenzyme in this reaction, and the pyruvate is formed at the N-terminus of the alpha chain, which is derived from the carboxyl end of the proenzyme. The post-translation cleavage follows an unusual pathway, termed non-hydrolytic serinolysis, in which the side chain hydroxyl group of the serine supplies its oxygen atom to form the C-terminus of the beta chain, while the remainder of the serine residue undergoes an oxidative deamination to produce ammonia and the pyruvoyl group blocking the N-terminus of the alpha chain.

The catalysed reaction is S-adenosyl-L-methionine + H(+) = S-adenosyl 3-(methylsulfanyl)propylamine + CO2. It functions in the pathway amine and polyamine biosynthesis; S-adenosylmethioninamine biosynthesis; S-adenosylmethioninamine from S-adenosyl-L-methionine: step 1/1. Its function is as follows. Catalyzes the decarboxylation of S-adenosylmethionine to S-adenosylmethioninamine (dcAdoMet), the propylamine donor required for the synthesis of the polyamines spermine and spermidine from the diamine putrescine. The sequence is that of S-adenosylmethionine decarboxylase proenzyme from Pectobacterium atrosepticum (strain SCRI 1043 / ATCC BAA-672) (Erwinia carotovora subsp. atroseptica).